A 277-amino-acid chain; its full sequence is Myelin proteolipid protein (277 aa).

Over 1 to 10 (MGLLECCARC) the chain is Cytoplasmic. Residues C6, C7, and C10 are each lipidated (S-palmitoyl cysteine). A helical transmembrane segment spans residues 11–36 (LVGAPFASLVATGLCFFGVALFCGCG). Residues 37–59 (HEALTGTEKLIETYFSKNYQDYE) lie on the Extracellular side of the membrane. A helical transmembrane segment spans residues 60–88 (YLINVIHAFQYVIYGTASFFFLYGALLLA). Residues 89–151 (EGFYTTGAVR…LGKWLGHPDK (63 aa)) lie on the Cytoplasmic side of the membrane. C109 carries S-palmitoyl cysteine lipidation. Phosphoserine is present on S114. A phosphothreonine mark is found at T116 and T118. Residue C141 is the site of S-palmitoyl cysteine attachment. Residues 152–178 (FVGITYALTVVWLLVFACSAVPVYIYF) traverse the membrane as a helical segment. The Extracellular portion of the chain corresponds to 179–238 (NTWTTCQSIAFPSKTSASIGSLCADARMYGVLPWNAFPGKVCGSNLLSICKTAEFQMTFH). 2 disulfide bridges follow: C184–C228 and C201–C220. A lipid anchor (O-palmitoyl serine) is attached at S199. Residues 239 to 268 (LFIAAFVGAAATLISLLTFMIAATYNFAVL) form a helical membrane-spanning segment. The Cytoplasmic portion of the chain corresponds to 269–277 (KLMGRGTKF).

It belongs to the myelin proteolipid protein family.

It localises to the cell membrane. The protein resides in the myelin membrane. Its function is as follows. This is the major myelin protein from the central nervous system. It plays an important role in the formation or maintenance of the multilamellar structure of myelin. In Macaca fascicularis (Crab-eating macaque), this protein is Myelin proteolipid protein (PLP1).